We begin with the raw amino-acid sequence, 75 residues long: MAVPKKRKSKSRANSQNHVWKREIVKQARRAVSLAKALLGGNTNFLLVSPGPTTPIKPNPKKQTGRRPRSQRRRT.

A disordered region spans residues 49 to 75 (SPGPTTPIKPNPKKQTGRRPRSQRRRT). A compositionally biased stretch (basic residues) spans 59–75 (NPKKQTGRRPRSQRRRT).

This sequence belongs to the bacterial ribosomal protein bL32 family.

It is found in the plastid. Its subcellular location is the chloroplast. The protein is Large ribosomal subunit protein bL32c of Nephroselmis olivacea (Green alga).